The primary structure comprises 448 residues: tRNA methyltransferase 10 homolog C (448 aa).

A mitochondrion-targeting transit peptide spans 1–48 (MAFVNTLLRTIRCSAVHTLVQEGRSLSLLKASHQLTQSRKIMLSNHVR). Positions 137–165 (REVMKTNRKEKKKELKESKSKIESLDQLE) form a coiled coil. Residues 144 to 167 (RKEKKKELKESKSKIESLDQLETK) are disordered. Positions 190–382 (QRWKCVQAMK…SFVPNRKHDG (193 aa)) constitute an SAM-dependent MTase TRM10-type domain. The interval 429-448 (ERTDDTSIRSTRKRWWEEEN) is disordered.

It belongs to the class IV-like SAM-binding methyltransferase superfamily. TRM10 family. In terms of assembly, component of mitochondrial ribonuclease P. Interacts with HSD17B10/MRPP2.

It is found in the mitochondrion matrix. It localises to the mitochondrion nucleoid. The enzyme catalyses adenosine(9) in tRNA + S-adenosyl-L-methionine = N(1)-methyladenosine(9) in tRNA + S-adenosyl-L-homocysteine + H(+). It carries out the reaction guanosine(9) in tRNA + S-adenosyl-L-methionine = N(1)-methylguanosine(9) in tRNA + S-adenosyl-L-homocysteine + H(+). The catalysed reaction is an adenosine in mRNA + S-adenosyl-L-methionine = an N(1)-methyladenosine in mRNA + S-adenosyl-L-homocysteine + H(+). Mitochondrial tRNA N(1)-methyltransferase involved in mitochondrial tRNA maturation. Component of mitochondrial ribonuclease P, which cleaves tRNA molecules in their 5'-ends. Together with hsd17b10/mrpp2, forms a subcomplex of the mitochondrial ribonuclease P, named MRPP1-MRPP2 subcomplex, which displays functions that are independent of the ribonuclease P activity. The MRPP1-MRPP2 subcomplex catalyzes the formation of N(1)-methylguanine and N(1)-methyladenine at position 9 (m1G9 and m1A9, respectively) in tRNAs; trmt10c/mrpp1 acting as the catalytic N(1)-methyltransferase subunit. The MRPP1-MRPP2 subcomplex also acts as a tRNA maturation platform: following 5'-end cleavage by the mitochondrial ribonuclease P complex, the MRPP1-MRPP2 subcomplex enhances the efficiency of 3'-processing catalyzed by ELAC2, retains the tRNA product after elac2 processing and presents the nascent tRNA to the mitochondrial CCA tRNA nucleotidyltransferase TRNT1 enzyme. In addition to tRNA N(1)-methyltransferase activity, trmt10c/mrpp1 also acts as a mRNA N(1)-methyltransferase by mediating methylation of adenosine residues at the N(1) position of MT-ND5 mRNA. This is tRNA methyltransferase 10 homolog C from Xenopus tropicalis (Western clawed frog).